The sequence spans 211 residues: CASP-like protein 3A1 (211 aa).

The Cytoplasmic segment spans residues 1-45 (MGSIGNGRSDSVVGIQMPPAGSKMVLEPEALQVTTSPVPRWPRLG). A helical membrane pass occupies residues 46–66 (VVMVATRAVAMVMALLSMSLM). The Extracellular portion of the chain corresponds to 67–95 (VSSKQRGILTIFGIEIPLDANWSFSYSLQ). An N-linked (GlcNAc...) asparagine glycan is attached at N87. The chain crosses the membrane as a helical span at residues 96–116 (FLVAMSTASAAYSLAQLLLIA). Residues 117–131 (HKAVKKSPIVPSRRH) are Cytoplasmic-facing. Residues 132–152 (AWLLFAGDQVFSLAMMSAGSA) form a helical membrane-spanning segment. The Extracellular segment spans residues 153–186 (AAAVANLNRTGIRHTALPNFCKPLPRFCDLSAVS). N-linked (GlcNAc...) asparagine glycosylation is present at N160. Residues 187–207 (IACAFLSCVFLAASAVIDVIW) traverse the membrane as a helical segment. The Cytoplasmic segment spans residues 208-211 (LSSP).

Belongs to the Casparian strip membrane proteins (CASP) family. In terms of assembly, homodimer and heterodimers.

Its subcellular location is the cell membrane. This is CASP-like protein 3A1 from Sorghum bicolor (Sorghum).